Consider the following 140-residue polypeptide: Perlin matrix protein (140 aa).

The N-terminal stretch at 1-26 (MTCTLRLTVAALVLLGICHLSRPVAA) is a signal peptide.

Belongs to the N16 matrix protein family. In terms of assembly, heterooligomer; disulfide-linked. Pif97, Pif80, N16 and other proteins form a complex. As to expression, component of conchiolin, the organic matrix of nacre. Only expressed in the dorsal region of the mantle.

The protein resides in the secreted. The protein localises to the extracellular space. Its subcellular location is the extracellular matrix. In terms of biological role, may be specifically involved in the formation of the nacreous layer. This Margaritifera margaritifera (Freshwater pearl mussel) protein is Perlin matrix protein.